Consider the following 46-residue polypeptide: MALSSTMWCTFLSMMLTALLSCHQQVILMRHILLKLFHNSLHKAML.

This is an uncharacterized protein from Acidianus sp. F28 (AFV-2).